Reading from the N-terminus, the 342-residue chain is Signaling lymphocytic activation molecule (342 aa).

The first 26 residues, 1–26 (MDSRGFLSLRCLLVLALASKLSCGTG), serve as a signal peptide directing secretion. The Extracellular portion of the chain corresponds to 27-237 (ESLMNCPEVP…CRPESSVPRQ (211 aa)). The Ig-like V-type domain occupies 29–138 (LMNCPEVPGK…QHFCLQLKLY (110 aa)). N-linked (GlcNAc...) asparagine glycans are attached at residues Asn57, Asn102, Asn125, Asn150, Asn157, Asn189, and Asn217. Residues 144-223 (PEIKVLNWTQ…PVSNRSWSFN (80 aa)) form the Ig-like C2-type domain. 2 disulfides stabilise this stretch: Cys158–Cys228 and Cys164–Cys209. A helical transmembrane segment spans residues 238–261 (WRLYAGLFLGGIVGVILIFEVVLL). The Cytoplasmic segment spans residues 262-342 (LLRRRGKTNH…VYASVTFPES (81 aa)). An ITSM 1 motif is present at residues 282–287 (TIYAQV). 3 positions are modified to phosphotyrosine; by FYN: Tyr284, Tyr310, and Tyr334. An SH2-binding motif is present at residues 310–315 (YVAATE). The short motif at 332 to 337 (TVYASV) is the ITSM 2 element.

As to quaternary structure, interacts (via cytoplasmic domain) with SH2D1A and SH2D1B; SH2D1A mediates association with FYN. Interacts (via cytoplasmic domain phosphorylated on tyrosine residues) with INPP5D and PTPN11; presence of SH2D1A facilitates binding to INPP5D. Interacts with MAP4K1. Interacts with PIK3C3, BECN1 and UVRAG; indicative for an association with PI3K complex II (PI3KC3-C2). Interacts with canine distemper virus HN protein; suggesting that it may serve as a receptor. In terms of processing, phosphorylated on tyrosine residues by FYN.

It is found in the cell membrane. Self-ligand receptor of the signaling lymphocytic activation molecule (SLAM) family. SLAM receptors triggered by homo- or heterotypic cell-cell interactions are modulating the activation and differentiation of a wide variety of immune cells and thus are involved in the regulation and interconnection of both innate and adaptive immune response. Activities are controlled by presence or absence of small cytoplasmic adapter proteins, SH2D1A/SAP and/or SH2D1B/EAT-2. SLAMF1-induced signal-transduction events in T-lymphocytes are different from those in B-cells. Two modes of SLAMF1 signaling seem to exist: one depending on SH2D1A (and perhaps SH2D1B) and another in which protein-tyrosine phosphatase 2C (PTPN11)-dependent signal transduction operates. Initially it has been proposed that association with SH2D1A prevents binding to inhibitory effectors including INPP5D/SHIP1 and PTPN11/SHP-2. However, signaling is also regulated by SH2D1A which can simultaneously interact with and recruit FYN which subsequently phosphorylates and activates SLAMF1. Mediates IL-2-independent proliferation of activated T cells during immune responses and induces IFN-gamma production. Downstreaming signaling involves INPP5D/SHIP1, DOK1 and DOK2 leading to inhibited IFN-gamma production in T-cells, and PRKCQ, BCL10 and NFKB1 leading to increased T-cell activation and Th2 cytokine production. Promotes T-cell receptor-induced IL-4 secretion by CD4(+) cells. Inhibits antigen receptor-mediated production of IFN-gamma, but not IL-2, in CD4(-)/CD8(-) T-cells. Required for IL-4 production by germinal centers T follicular helper (T(Fh))cells. May inhibit CD40-induced signal transduction in monocyte-derived dendritic cells. May play a role in allergic responses and may regulate allergen-induced Th2 cytokine and Th1 cytokine secretion. In conjunction with SLAMF6 controls the transition between positive selection and the subsequent expansion and differentiation of the thymocytic natural killer T (NKT) cell lineage. Involved in the peripheral differentiation of indifferent natural killer T (iNKT) cells toward a regulatory NKT2 type. In macrophages involved in down-regulation of IL-12, TNF-alpha and nitric oxide in response to lipopolysaccharide (LPS). In B-cells activates the ERK signaling pathway independently of SH2D1A but implicating both, SYK and INPP5D, and activates Akt signaling dependent on SYK and SH2D1A. In conjunction with SLAMF5 and SLAMF6 may be a negative regulator of the humoral immune response. The protein is Signaling lymphocytic activation molecule (SLAMF1) of Canis lupus familiaris (Dog).